Here is a 199-residue protein sequence, read N- to C-terminus: 5'-deoxynucleotidase YfbR (199 aa).

Residues 18–19 (RW) and His33 each bind substrate. The region spanning 30 to 142 (VSEHSLQVAM…VKQADALCAY (113 aa)) is the HD domain. Positions 33, 68, and 69 each coordinate a divalent metal cation. Residues Asp69, 77–80 (DLPT), and Asp137 contribute to the substrate site. Residue Asp137 participates in a divalent metal cation binding.

It belongs to the 5DNU family. Homodimer. It depends on a divalent metal cation as a cofactor.

It is found in the cytoplasm. The enzyme catalyses a 2'-deoxyribonucleoside 5'-phosphate + H2O = a 2'-deoxyribonucleoside + phosphate. Its function is as follows. Catalyzes the strictly specific dephosphorylation of 2'-deoxyribonucleoside 5'-monophosphates. In Salmonella agona (strain SL483), this protein is 5'-deoxynucleotidase YfbR.